A 1191-amino-acid chain; its full sequence is Phosphatidylinositol 3,4,5-trisphosphate 5-phosphatase 1 (1191 aa).

Residues 8 to 104 form the SH2 domain; sequence WNHGNITRSK…GLVTHLQYPV (97 aa). The interval 122–148 is disordered; that stretch reads SVMSPPELPPRNIPMSAGPSEAKDLPL. An SH3-binding 1 motif is present at residues 127 to 132; that stretch reads PELPPR. At serine 246 the chain carries Phosphoserine. The NPXY motif 1 signature appears at 915–918; the sequence is NPNY. At tyrosine 918 the chain carries Phosphotyrosine. Serine 935 bears the Phosphoserine mark. Tyrosine 945 is modified (phosphotyrosine). Disordered regions lie at residues 947–994 and 1021–1191; these read QLPK…EARP and YGSV…TAMQ. Positions 962 to 972 are enriched in pro residues; it reads PPTPPSQPPLS. A Phosphothreonine modification is found at threonine 964. Phosphoserine occurs at positions 967 and 972. The SH3-binding 2 motif lies at 970-975; the sequence is PLSPKK. The segment at 1015–1029 is interaction with DAB2; it reads MFENPLYGSVSSFPK. An NPXY motif 2 motif is present at residues 1018-1021; the sequence is NPLY. Tyrosine 1021 is subject to Phosphotyrosine. Residues 1032–1046 are compositionally biased toward basic and acidic residues; sequence PRKEQESPKMLRKEP. The short motif at 1039 to 1050 is the SH3-binding 3 element; that stretch reads PKMLRKEPPPCP. A compositionally biased stretch (pro residues) spans 1141-1150; the sequence is IPAPRPPLPV. Over residues 1162–1184 the composition is skewed to basic and acidic residues; it reads KGRDYRDNTELPHHGKHRQEEGL.

It belongs to the inositol 1,4,5-trisphosphate 5-phosphatase family. As to quaternary structure, interacts with tyrosine phosphorylated form of SHC1. Interacts with tyrosine phosphorylated form of DOK1. Interacts with tyrosine phosphorylated form of DOK3. Interacts with tyrosine phosphorylated form of SLAMF1/CD150. Interacts with PTPN11/SHP-2 in response to IL-3. Interacts with receptor EPOR. Interacts with receptors MS4A2/FCER1B and FCER1G. Interacts with receptors FCGR2B and FCGR3. Interacts with receptor FCGR2A, leading to regulate gene expression during the phagocytic process. Interacts with GRB2. Interacts with PLCG1. Interacts with tyrosine kinases SRC and TEC. Interacts with CRKL. Interacts with c-Met/MET. Interacts with MILR1 (tyrosine-phosphorylated). Isoform 5 interacts with IL6ST/gp130. Can weakly interact (via NPXY motif 2) with DAB2 (via PID domain); the interaction is impaired by tyrosine phosphorylation of the NPXY motif. Interacts (via SH2 domain) with tyrosine phosphorylated KLRC1 (via ITIM). Interacts with MPL/TPOR. Tyrosine phosphorylated by the members of the SRC family after exposure to a diverse array of extracellular stimuli such as cytokines, growth factors, antibodies, chemokines, integrin ligands and hypertonic and oxidative stress. Phosphorylated upon IgG receptor FCGR2B-binding. Specifically expressed in immune and hematopoietic cells. Levels vary considerably within this compartment. Lost during erythropoiesis when erythroid cells become Ter119+. Increases substantially with T-cell maturation and when resting B-cells are activated. Also present in mature granulocytes, monocyte/macrophages, mast cells and platelets. Isoform 5 is the only form expressed in embryonic stem (ES) cells and is coexpressed with other isoforms in hematopoietic stem cells, and disappears with differentiation.

It localises to the cytoplasm. The protein localises to the cell membrane. Its subcellular location is the membrane raft. It is found in the cytoskeleton. The catalysed reaction is a 1,2-diacyl-sn-glycero-3-phospho-(1D-myo-inositol-3,4,5-trisphosphate) + H2O = a 1,2-diacyl-sn-glycero-3-phospho-(1D-myo-inositol-3,4-bisphosphate) + phosphate. It catalyses the reaction a 1,2-diacyl-sn-glycero-3-phospho-(1D-myo-inositol-4,5-bisphosphate) + H2O = a 1,2-diacyl-sn-glycero-3-phospho-(1D-myo-inositol 4-phosphate) + phosphate. It carries out the reaction 1D-myo-inositol 1,3,4,5-tetrakisphosphate + H2O = 1D-myo-inositol 1,3,4-trisphosphate + phosphate. Its activity is regulated as follows. Activated upon translocation to the sites of synthesis of PtdIns(3,4,5)P3 in the membrane. In terms of biological role, phosphatidylinositol (PtdIns) phosphatase that specifically hydrolyzes the 5-phosphate of phosphatidylinositol-3,4,5-trisphosphate (PtdIns(3,4,5)P3) to produce PtdIns(3,4)P2, thereby negatively regulating the PI3K (phosphoinositide 3-kinase) pathways. Also able to hydrolyze the 5-phosphate of phosphatidylinositol-4,5-bisphosphate (PtdIns(4,5)P3) and inositol 1,3,4,5-tetrakisphosphate. Acts as a negative regulator of B-cell antigen receptor signaling. Mediates signaling from the FC-gamma-RIIB receptor (FCGR2B), playing a central role in terminating signal transduction from activating immune/hematopoietic cell receptor systems. Acts as a negative regulator of myeloid cell proliferation/survival and chemotaxis, mast cell degranulation, immune cells homeostasis, integrin alpha-IIb/beta-3 signaling in platelets and JNK signaling in B-cells. Regulates proliferation of osteoclast precursors, macrophage programming, phagocytosis and activation and is required for endotoxin tolerance. Involved in the control of cell-cell junctions, CD32a signaling in neutrophils and modulation of EGF-induced phospholipase C activity. Key regulator of neutrophil migration, by governing the formation of the leading edge and polarization required for chemotaxis. Modulates FCGR3/CD16-mediated cytotoxicity in NK cells. Mediates the activin/TGF-beta-induced apoptosis through its Smad-dependent expression. The polypeptide is Phosphatidylinositol 3,4,5-trisphosphate 5-phosphatase 1 (Inpp5d) (Mus musculus (Mouse)).